The primary structure comprises 355 residues: Probable NADPH-dependent quinone reductase tdiC (355 aa).

It belongs to the zinc-containing alcohol dehydrogenase family. NADPH is required as a cofactor.

Its pathway is secondary metabolite biosynthesis. Probable NADPH-dependent quinone reductase; part of the gene cluster that mediates the biosynthesis of terrequinone A, an antitumor agent. The first step in the biosynthetic pathway for terrequinone A is formation of indole pyruvic acid (IPA) from L-tryptophan by the aminotransferase tdiD. The nonribosomal peptide synthase tdiA then immediately converts unstable IPA to didemethylasterriquinone D (DDAQ D), via condensation of 2 IPA molecules. The symmetric connectivity of the 2 IPA molecules is thought to arise by head-to-tail dual Claisen condensations facilitated by the TE domain. TdiB then catalyzes reverse prenylation by transferring dimethylallyl diphosphate to carbon atom 2' of DDAQ D, to yield asterriquinone C-1. Finally, tdiC and tdiE enzymes robustly convert asterriquinone C-1 to terrequinone A via a transformation involving regular prenylation at carbon atom 5, which requires elimination of the hydroxy group on C-5. The sequence is that of Probable NADPH-dependent quinone reductase tdiC from Emericella nidulans (strain FGSC A4 / ATCC 38163 / CBS 112.46 / NRRL 194 / M139) (Aspergillus nidulans).